The following is a 150-amino-acid chain: Protein ADM2 (150 aa).

The signal sequence occupies residues 1–25 (MAQLLMVTVTLGCISLLYLLPGTLS). Residues 26 to 100 (GSLGKGLRHS…HPGPQRPTGS (75 aa)) constitute a propeptide that is removed on maturation. The interval 28-102 (LGKGLRHSRP…GPQRPTGSRR (75 aa)) is disordered. C112 and C117 are disulfide-bonded. Tyrosine amide is present on Y149.

The protein belongs to the adrenomedullin family. As to expression, high expression detected in the submaxillary gland, kidney, stomach, and mesentery, followed by the pituitary, lung, pancreas, intestines, spleen, thymus and ovary. Expressed mainly in the intermediate lobe of the pituitary, with sporadic in the anterior lobe.

It is found in the secreted. In terms of biological role, intermedin/ADM2 is a peptide hormone that plays a role as physiological regulator of gastrointestinal and cardiovascular bioactivities mediated by the CALCRL-RAMPs receptor complexes. Activates the cAMP-dependent pathway through interaction with CALCRL-RAMP3 receptor complex. The sequence is that of Protein ADM2 from Mus musculus (Mouse).